The following is a 338-amino-acid chain: MSRTSLTRFLIQEQHAGRINADLRQLIAVVARACTSISIAVSKGALGGVLGDAGTGNVQGEAQKKLDVISNEILLEANAWGGHLAACASEEMDHSQPVPDIYPRGDFLLLFDPLDGSSNIDVNVSVGTIFSVLRCPTNVELPGDDAFLQPGSKQIAAGYCIYGPSTQLVLTVGHGTHAFTLDREKGEFVLTTENMQIPAATQEFAINMSNQRHWEAPMQAYVGDLLAGKEGTRGKNFNMRWIASMVADVHRILTRGGIFIYPWDKKDPSKAGKLRLMYEANPMGLLVEQAGGAAWTGRERILDIQPDQLHQRVPVFLGSREEVAEAVRYHHAHDNAQG.

E90, D112, L114, and D115 together coordinate Mg(2+). Residues 115–118 (DGSS), N207, and K273 contribute to the substrate site. A Mg(2+)-binding site is contributed by E279.

It belongs to the FBPase class 1 family. Homotetramer. Mg(2+) is required as a cofactor.

It is found in the cytoplasm. The enzyme catalyses beta-D-fructose 1,6-bisphosphate + H2O = beta-D-fructose 6-phosphate + phosphate. The protein operates within carbohydrate biosynthesis; gluconeogenesis. In Stenotrophomonas maltophilia (strain K279a), this protein is Fructose-1,6-bisphosphatase class 1.